The chain runs to 453 residues: MKHIHILGICGTFMGGVAMIAKQMGYHVTGSDTNVYPPMSTFLEEQGIEIIPNYDVAQLQPAPDMVIVGNAMKRGNPCVEYVLENNLKYTSGPQWLHDHLLRDRWVLAVSGTHGKTTTTGMLTWVLEQNGLKSGFLIGGIAGNFGISARLGDSPYFIIEADEYDTAFFDKRSKFVHYNPRTLIVNNISFDHADIFDDLKAIQRQFHHMIRTIPASGLVLSSASEQSAKETLALGCWSQQQFLGKDNEWFAERITNDASHFAVFHHGEKVAEVKWNVVGQHNMHNALMAIAAAHHTGVAIEDACKALGSFVNAKRRLEVKGEVNSITVYDDFAHHPEAILATLTALRDKVGGGVRILAVLEPRSNTMKMGVHKDDIAPALGRADAVFMLQPEQLSWEVADIANQCVQPAYWNANLDRLVDMIVAKAQPTDHILVMSNGSFGGIHQKILDKLKLK.

111 to 117 (GTHGKTT) is a binding site for ATP.

It belongs to the MurCDEF family. Mpl subfamily. It depends on Mg(2+) as a cofactor.

It catalyses the reaction UDP-N-acetyl-alpha-D-muramate + L-alanyl-gamma-D-glutamyl-meso-2,6-diaminopimelate + ATP = UDP-N-acetyl-alpha-D-muramoyl-L-alanyl-gamma-D-glutamyl-meso-2,6-diaminopimelate + ADP + phosphate + H(+). The protein operates within cell wall biogenesis; peptidoglycan recycling. Functionally, reutilizes the intact tripeptide L-alanyl-gamma-D-glutamyl-meso-diaminopimelate by linking it to UDP-N-acetylmuramate. The chain is UDP-N-acetylmuramate--L-alanyl-gamma-D-glutamyl-meso-2,6-diaminoheptandioate ligase from Haemophilus influenzae (strain ATCC 51907 / DSM 11121 / KW20 / Rd).